We begin with the raw amino-acid sequence, 1072 residues long: DNA-directed RNA polymerase subunit beta (1072 aa).

This sequence belongs to the RNA polymerase beta chain family. In terms of assembly, in plastids the minimal PEP RNA polymerase catalytic core is composed of four subunits: alpha, beta, beta', and beta''. When a (nuclear-encoded) sigma factor is associated with the core the holoenzyme is formed, which can initiate transcription.

It is found in the plastid. It localises to the chloroplast. The enzyme catalyses RNA(n) + a ribonucleoside 5'-triphosphate = RNA(n+1) + diphosphate. DNA-dependent RNA polymerase catalyzes the transcription of DNA into RNA using the four ribonucleoside triphosphates as substrates. The sequence is that of DNA-directed RNA polymerase subunit beta from Arabidopsis thaliana (Mouse-ear cress).